Here is a 306-residue protein sequence, read N- to C-terminus: Glutathione transport system permease protein GsiC (306 aa).

Residues 1 to 8 lie on the Cytoplasmic side of the membrane; sequence MLNYVIKR. A helical transmembrane segment spans residues 9 to 29; that stretch reads LLGLIPTLFIVSVLVFLFVHM. The Periplasmic segment spans residues 30–102; it reads LPGDPARLIA…SRFMPTLWLT (73 aa). The region spanning 95–292 is the ABC transmembrane type-1 domain; sequence FMPTLWLTIT…LEFILINLVV (198 aa). Residues 103 to 123 traverse the membrane as a helical segment; sequence ITSMVWAVIFGMAAGIIAAVW. Residues 124–134 lie on the Cytoplasmic side of the membrane; it reads RNRWPDRLSMT. The chain crosses the membrane as a helical span at residues 135-155; the sequence is IAVSGISFPAFALGMLLIQVF. Topologically, residues 156 to 168 are periplasmic; that stretch reads SVELGWLPTVGAD. Residues 169 to 189 form a helical membrane-spanning segment; sequence SWQHYILPSLTLGAAVAAVMA. Residues 190–228 are Cytoplasmic-facing; the sequence is RFTRASFVDVLSEDYMRTARAKGVSETWVVLKHGLRNAM. Residues 229–249 traverse the membrane as a helical segment; sequence IPVVTMMGLQFGFLLGGSIVV. At 250–277 the chain is on the periplasmic side; that stretch reads EKVFNWPGLGRLLVDSVEMRDYPVIQAE. The helical transmembrane segment at 278 to 298 threads the bilayer; that stretch reads ILLFSLEFILINLVVDVLYAA. At 299-306 the chain is on the cytoplasmic side; that stretch reads INPAIRYK.

Belongs to the binding-protein-dependent transport system permease family. The complex is composed of two ATP-binding proteins (GsiA), two transmembrane proteins (GsiC and GsiD) and a solute-binding protein (GsiB).

It is found in the cell inner membrane. In terms of biological role, part of the ABC transporter complex GsiABCD involved in glutathione import. Probably responsible for the translocation of the substrate across the membrane. In Escherichia coli O6:H1 (strain CFT073 / ATCC 700928 / UPEC), this protein is Glutathione transport system permease protein GsiC.